Consider the following 500-residue polypeptide: Lysine--tRNA ligase (500 aa).

2 residues coordinate Mg(2+): Glu-410 and Glu-417.

It belongs to the class-II aminoacyl-tRNA synthetase family. In terms of assembly, homodimer. Requires Mg(2+) as cofactor.

It is found in the cytoplasm. It catalyses the reaction tRNA(Lys) + L-lysine + ATP = L-lysyl-tRNA(Lys) + AMP + diphosphate. The sequence is that of Lysine--tRNA ligase from Shewanella sediminis (strain HAW-EB3).